A 193-amino-acid polypeptide reads, in one-letter code: Potassium-transporting ATPase KdpC subunit (193 aa).

The helical transmembrane segment at 7 to 27 threads the bilayer; that stretch reads PLIVVFVVLVAVTGLAYPAVM.

It belongs to the KdpC family. In terms of assembly, the system is composed of three essential subunits: KdpA, KdpB and KdpC.

Its subcellular location is the cell inner membrane. Part of the high-affinity ATP-driven potassium transport (or Kdp) system, which catalyzes the hydrolysis of ATP coupled with the electrogenic transport of potassium into the cytoplasm. This subunit acts as a catalytic chaperone that increases the ATP-binding affinity of the ATP-hydrolyzing subunit KdpB by the formation of a transient KdpB/KdpC/ATP ternary complex. In Burkholderia mallei (strain NCTC 10247), this protein is Potassium-transporting ATPase KdpC subunit.